The chain runs to 579 residues: Zinc finger protein 384 (579 aa).

The disordered stretch occupies residues 171 to 198 (TLTEEGGGGGGGGGTVAPPKPPRGRKKK). The segment covering 175-185 (EGGGGGGGGGT) has biased composition (gly residues). C2H2-type zinc fingers lie at residues 229–251 (YRCR…SKSH), 257–279 (HKCP…IRIH), 285–307 (YSCN…TRIH), 318–340 (HKCP…LRIH), 346–368 (YNCS…TRIH), 374–398 (YKCA…RRQH), 404–426 (FKCH…LSTH), and 434–456 (YTCT…MRKH). Residues 500–513 (QAQASQASQQQQQQ) show a composition bias toward low complexity. Residues 500–553 (QAQASQASQQQQQQQPPPPQPPHFQSPGAAPQGGGGGDSNQNPPPQCSFDLTPY) form a disordered region. Pro residues predominate over residues 514–523 (QPPPPQPPHF).

It belongs to the krueppel C2H2-type zinc-finger protein family. As to quaternary structure, interacts with BCAR1. In terms of tissue distribution, expressed in osteocytes, osteoblasts, and chondrocytes in bone.

Its subcellular location is the nucleus. Transcription factor that binds the consensus DNA sequence [GC]AAAAA. Seems to bind and regulate the promoters of MMP1, MMP3, MMP7 and COL1A1. This is Zinc finger protein 384 (Znf384) from Rattus norvegicus (Rat).